The chain runs to 87 residues: Ragulator complex protein LAMTOR4 homolog (87 aa).

It belongs to the LAMTOR4 family. As to quaternary structure, part of the Ragulator complex.

Its subcellular location is the lysosome. Functionally, regulator of the TOR pathway, a signaling cascade that promotes cell growth in response to growth factors, energy levels, and amino acids. As part of the Ragulator complex, may activate the TOR signaling cascade in response to amino acids. This is Ragulator complex protein LAMTOR4 homolog from Dictyostelium discoideum (Social amoeba).